The following is a 236-amino-acid chain: Mediator of RNA polymerase II transcription subunit 20 (236 aa).

It belongs to the Mediator complex subunit 20 family. Component of the Mediator complex.

It is found in the nucleus. Functionally, component of the Mediator complex, a coactivator involved in the regulated transcription of nearly all RNA polymerase II-dependent genes. Mediator functions as a bridge to convey information from gene-specific regulatory proteins to the basal RNA polymerase II transcription machinery. Mediator is recruited to promoters by direct interactions with regulatory proteins and serves as a scaffold for the assembly of a functional preinitiation complex with RNA polymerase II and the general transcription factors. This is Mediator of RNA polymerase II transcription subunit 20 (SRB2) from Debaryomyces hansenii (strain ATCC 36239 / CBS 767 / BCRC 21394 / JCM 1990 / NBRC 0083 / IGC 2968) (Yeast).